The sequence spans 591 residues: Aspartate--tRNA(Asp/Asn) ligase (591 aa).

Residue Glu170 coordinates L-aspartate. An aspartate region spans residues 194 to 197 (QLFK). Arg216 is a binding site for L-aspartate. ATP is bound by residues 216-218 (RDE) and Gln225. His448 is a binding site for L-aspartate. Glu482 contributes to the ATP binding site. Arg489 contributes to the L-aspartate binding site. Residue 534–537 (GWDR) coordinates ATP. The tract at residues 559–591 (GGVDPLTDAPAPITEQQRKESGIDVKPEPSKPH) is disordered. Basic and acidic residues predominate over residues 574–591 (QQRKESGIDVKPEPSKPH).

Belongs to the class-II aminoacyl-tRNA synthetase family. Type 1 subfamily. As to quaternary structure, homodimer.

It localises to the cytoplasm. It catalyses the reaction tRNA(Asx) + L-aspartate + ATP = L-aspartyl-tRNA(Asx) + AMP + diphosphate. Functionally, aspartyl-tRNA synthetase with relaxed tRNA specificity since it is able to aspartylate not only its cognate tRNA(Asp) but also tRNA(Asn). Reaction proceeds in two steps: L-aspartate is first activated by ATP to form Asp-AMP and then transferred to the acceptor end of tRNA(Asp/Asn). In Mycolicibacterium paratuberculosis (strain ATCC BAA-968 / K-10) (Mycobacterium paratuberculosis), this protein is Aspartate--tRNA(Asp/Asn) ligase.